The following is a 57-amino-acid chain: Probable antitoxin MazE1 (57 aa).

As to quaternary structure, forms a complex with cognate toxin MazF1.

Functionally, antitoxin component of a type II toxin-antitoxin (TA) system. The polypeptide is Probable antitoxin MazE1 (mazE1) (Mycobacterium tuberculosis (strain ATCC 25618 / H37Rv)).